We begin with the raw amino-acid sequence, 361 residues long: MAEPSLVAAGEEPEERAIEAALRPKNLDDFVGQHRVRKQLSLVLKASRMRGRSADHVLFSGPPGLGKTTLAMIVAAEMNAPLRISSGPAIQHAGDLAAILSSLSEGEVLFLDEIHRMSRPAEEMLYMAMEDFRVDIVVGKGAGATAIPLELPPFTLVGATTRAGLLPGPLRDRFGFTGHLEFYSVPELELVLRRSAGLLDLKVNSAGFSEIAGRSRGTPRIANRLLRRVRDWALVHGVDQIDARSASAALDMYEVDKKGLDRLDRSVLEALITKFGGGPVGLSTLAIAVGEETETVETVAEPFLVREGLLGRTPRGRIAMAPAWTHLGYAIPAGVFGQEQLDLFDRETGAEVTGEWAPESQ.

Positions 1–183 (MAEPSLVAAG…FGFTGHLEFY (183 aa)) are large ATPase domain (RuvB-L). Residues L22, R23, G64, K67, T68, T69, 130–132 (EDF), R173, Y183, and R220 contribute to the ATP site. T68 contributes to the Mg(2+) binding site. Residues 184 to 254 (SVPELELVLR…SASAALDMYE (71 aa)) are small ATPAse domain (RuvB-S). The tract at residues 257–361 (KKGLDRLDRS…VTGEWAPESQ (105 aa)) is head domain (RuvB-H). Residues R312 and R317 each contribute to the DNA site.

It belongs to the RuvB family. Homohexamer. Forms an RuvA(8)-RuvB(12)-Holliday junction (HJ) complex. HJ DNA is sandwiched between 2 RuvA tetramers; dsDNA enters through RuvA and exits via RuvB. An RuvB hexamer assembles on each DNA strand where it exits the tetramer. Each RuvB hexamer is contacted by two RuvA subunits (via domain III) on 2 adjacent RuvB subunits; this complex drives branch migration. In the full resolvosome a probable DNA-RuvA(4)-RuvB(12)-RuvC(2) complex forms which resolves the HJ.

The protein resides in the cytoplasm. It catalyses the reaction ATP + H2O = ADP + phosphate + H(+). Functionally, the RuvA-RuvB-RuvC complex processes Holliday junction (HJ) DNA during genetic recombination and DNA repair, while the RuvA-RuvB complex plays an important role in the rescue of blocked DNA replication forks via replication fork reversal (RFR). RuvA specifically binds to HJ cruciform DNA, conferring on it an open structure. The RuvB hexamer acts as an ATP-dependent pump, pulling dsDNA into and through the RuvAB complex. RuvB forms 2 homohexamers on either side of HJ DNA bound by 1 or 2 RuvA tetramers; 4 subunits per hexamer contact DNA at a time. Coordinated motions by a converter formed by DNA-disengaged RuvB subunits stimulates ATP hydrolysis and nucleotide exchange. Immobilization of the converter enables RuvB to convert the ATP-contained energy into a lever motion, pulling 2 nucleotides of DNA out of the RuvA tetramer per ATP hydrolyzed, thus driving DNA branch migration. The RuvB motors rotate together with the DNA substrate, which together with the progressing nucleotide cycle form the mechanistic basis for DNA recombination by continuous HJ branch migration. Branch migration allows RuvC to scan DNA until it finds its consensus sequence, where it cleaves and resolves cruciform DNA. In Pseudarthrobacter chlorophenolicus (strain ATCC 700700 / DSM 12829 / CIP 107037 / JCM 12360 / KCTC 9906 / NCIMB 13794 / A6) (Arthrobacter chlorophenolicus), this protein is Holliday junction branch migration complex subunit RuvB.